The primary structure comprises 194 residues: Calcium-binding protein J (194 aa).

EF-hand domains follow at residues 62 to 97 and 98 to 133; these read WDKD…MTKA and PVVE…AVAC. Asp-75, Asp-77, Asn-79, Glu-86, Asp-111, Asp-113, Ser-115, His-117, and Glu-122 together coordinate Ca(2+).

It belongs to the recoverin family.

The protein is Calcium-binding protein J (cbpJ) of Dictyostelium discoideum (Social amoeba).